Here is a 143-residue protein sequence, read N- to C-terminus: uncharacterized protein (143 aa).

Residues 1-38 (MKYWKYLSQLTIRRPLTYNNALLYRNRFPSILTWKRSA) constitute a mitochondrion transit peptide.

It is found in the mitochondrion. This is an uncharacterized protein from Schizosaccharomyces pombe (strain 972 / ATCC 24843) (Fission yeast).